The following is a 459-amino-acid chain: Cysteine--tRNA ligase (459 aa).

Cysteine 28 serves as a coordination point for Zn(2+). Residues 30–40 carry the 'HIGH' region motif; the sequence is VTVYDLCHFGH. Residues cysteine 209, histidine 234, and glutamate 238 each contribute to the Zn(2+) site. Positions 266–270 match the 'KMSKS' region motif; it reads KMSKS. Residue lysine 269 coordinates ATP.

This sequence belongs to the class-I aminoacyl-tRNA synthetase family. As to quaternary structure, monomer. It depends on Zn(2+) as a cofactor.

The protein localises to the cytoplasm. The catalysed reaction is tRNA(Cys) + L-cysteine + ATP = L-cysteinyl-tRNA(Cys) + AMP + diphosphate. The chain is Cysteine--tRNA ligase from Actinobacillus pleuropneumoniae serotype 5b (strain L20).